A 921-amino-acid polypeptide reads, in one-letter code: Translation initiation factor IF-2 (921 aa).

3 disordered regions span residues 81–118 (AVAE…AAAP), 175–194 (PVVE…ANQA), and 219–301 (VAPA…KKHE). A compositionally biased stretch (pro residues) spans 96 to 112 (PAAPTPPEVPAAAPAPP). Residues 229–241 (RPSPAAGAPSRGA) are compositionally biased toward low complexity. Residues 292–301 (KKKEQPKKHE) show a composition bias toward basic and acidic residues. Residues 421-590 (KRPPVVTIMG…LLQADLMELK (170 aa)) form the tr-type G domain. A G1 region spans residues 430 to 437 (GHVDHGKT). 430-437 (GHVDHGKT) is a GTP binding site. The tract at residues 455 to 459 (GITQH) is G2. Positions 476–479 (DTPG) are G3. GTP is bound by residues 476–480 (DTPGH) and 530–533 (NKID). Residues 530 to 533 (NKID) are G4. Residues 566–568 (SAK) are G5.

This sequence belongs to the TRAFAC class translation factor GTPase superfamily. Classic translation factor GTPase family. IF-2 subfamily.

The protein resides in the cytoplasm. In terms of biological role, one of the essential components for the initiation of protein synthesis. Protects formylmethionyl-tRNA from spontaneous hydrolysis and promotes its binding to the 30S ribosomal subunits. Also involved in the hydrolysis of GTP during the formation of the 70S ribosomal complex. In Pelobacter propionicus (strain DSM 2379 / NBRC 103807 / OttBd1), this protein is Translation initiation factor IF-2.